Reading from the N-terminus, the 386-residue chain is Mannitol-1-phosphate 5-dehydrogenase (386 aa).

4-15 (AIHFGGGNIGRG) provides a ligand contact to NAD(+). Lysine 211 is a catalytic residue.

It belongs to the mannitol dehydrogenase family. In terms of assembly, monomer.

It carries out the reaction D-mannitol 1-phosphate + NAD(+) = beta-D-fructose 6-phosphate + NADH + H(+). In terms of biological role, catalyzes the NAD(H)-dependent interconversion of D-fructose 6-phosphate and D-mannitol 1-phosphate in the mannitol metabolic pathway. In Emericella nidulans (strain FGSC A4 / ATCC 38163 / CBS 112.46 / NRRL 194 / M139) (Aspergillus nidulans), this protein is Mannitol-1-phosphate 5-dehydrogenase (mpdA).